Here is a 280-residue protein sequence, read N- to C-terminus: Fasciclin-like arabinogalactan protein 3 (280 aa).

A signal peptide spans 1-24; it reads MGLKVSSSLLCLTILLAVSSIVSA. An FAS1 domain is found at 25–169; the sequence is VNITRVLEKY…LSVVQISMPI (145 aa). Residues asparagine 26, asparagine 126, and asparagine 159 are each glycosylated (N-linked (GlcNAc...) asparagine). Positions 180-193 are enriched in pro residues; sequence VPPPPPMSSPPAPS. The segment at 180–262 is disordered; the sequence is VPPPPPMSSP…EPPSSASNTG (83 aa). Positions 219-234 are enriched in low complexity; it reads APETAPASAPSESDSP. Serine 256 carries the GPI-anchor amidated serine lipid modification. Residues 257–280 constitute a propeptide, removed in mature form; that stretch reads SASNTGLSFGAVLVLGFVASFVGF.

This sequence belongs to the fasciclin-like AGP family.

The protein localises to the cell membrane. Its function is as follows. May be a cell surface adhesion protein. The polypeptide is Fasciclin-like arabinogalactan protein 3 (FLA3) (Arabidopsis thaliana (Mouse-ear cress)).